A 179-amino-acid polypeptide reads, in one-letter code: Peptide deformylase 2 (179 aa).

Residues cysteine 102 and histidine 144 each contribute to the Fe cation site. Residue glutamate 145 is part of the active site. Histidine 148 serves as a coordination point for Fe cation.

It belongs to the polypeptide deformylase family. Fe(2+) serves as cofactor.

The catalysed reaction is N-terminal N-formyl-L-methionyl-[peptide] + H2O = N-terminal L-methionyl-[peptide] + formate. In terms of biological role, removes the formyl group from the N-terminal Met of newly synthesized proteins. Requires at least a dipeptide for an efficient rate of reaction. N-terminal L-methionine is a prerequisite for activity but the enzyme has broad specificity at other positions. This is Peptide deformylase 2 from Nostoc sp. (strain PCC 7120 / SAG 25.82 / UTEX 2576).